A 352-amino-acid polypeptide reads, in one-letter code: Probable dual-specificity RNA methyltransferase RlmN (352 aa).

The Proton acceptor role is filled by E93. Residues F99 to D333 enclose the Radical SAM core domain. C106 and C336 are joined by a disulfide. [4Fe-4S] cluster-binding residues include C113, C117, and C120. S-adenosyl-L-methionine contacts are provided by residues G164 to E165, S196, and N295. Residue C336 is the S-methylcysteine intermediate of the active site.

This sequence belongs to the radical SAM superfamily. RlmN family. [4Fe-4S] cluster serves as cofactor.

It localises to the cytoplasm. It catalyses the reaction adenosine(2503) in 23S rRNA + 2 reduced [2Fe-2S]-[ferredoxin] + 2 S-adenosyl-L-methionine = 2-methyladenosine(2503) in 23S rRNA + 5'-deoxyadenosine + L-methionine + 2 oxidized [2Fe-2S]-[ferredoxin] + S-adenosyl-L-homocysteine. The catalysed reaction is adenosine(37) in tRNA + 2 reduced [2Fe-2S]-[ferredoxin] + 2 S-adenosyl-L-methionine = 2-methyladenosine(37) in tRNA + 5'-deoxyadenosine + L-methionine + 2 oxidized [2Fe-2S]-[ferredoxin] + S-adenosyl-L-homocysteine. Functionally, specifically methylates position 2 of adenine 2503 in 23S rRNA and position 2 of adenine 37 in tRNAs. This Malacoplasma penetrans (strain HF-2) (Mycoplasma penetrans) protein is Probable dual-specificity RNA methyltransferase RlmN.